The sequence spans 507 residues: Arylsulfatase A (507 aa).

The N-terminal stretch at 1–18 (MGAPRSLLLALAAGLAVA) is a signal peptide. Ca(2+) is bound by residues aspartate 29, aspartate 30, and cysteine 69. Cysteine 69 functions as the Nucleophile in the catalytic mechanism. Residue cysteine 69 is modified to 3-oxoalanine (Cys). Residue lysine 123 coordinates substrate. Residue histidine 125 is part of the active site. Serine 150 contacts substrate. 2 disulfides stabilise this stretch: cysteine 156–cysteine 172 and cysteine 161–cysteine 168. N-linked (GlcNAc...) asparagine glycosylation is present at asparagine 158. Asparagine 184 is a glycosylation site (N-linked (GlcNAc...) asparagine). Histidine 229 contacts substrate. Ca(2+) contacts are provided by aspartate 281 and asparagine 282. 4 disulfides stabilise this stretch: cysteine 300–cysteine 414, cysteine 488–cysteine 500, cysteine 489–cysteine 502, and cysteine 493–cysteine 499. Residue lysine 302 coordinates substrate. A glycan (N-linked (GlcNAc...) asparagine) is linked at asparagine 350.

It belongs to the sulfatase family. In terms of assembly, homodimer at neutral pH and homooctamer at acidic pH. Exists both as a single chain of 58 kDa (component A) or as a chain of 50 kDa (component B) linked by disulfide bond(s) to a 7 kDa chain (component C). Interacts with SUMF1. Ca(2+) serves as cofactor. In terms of processing, the conversion to 3-oxoalanine (also known as C-formylglycine, FGly), of a serine or cysteine residue in prokaryotes and of a cysteine residue in eukaryotes, is critical for catalytic activity. This post-translational modification is severely defective in multiple sulfatase deficiency (MSD).

The protein resides in the endoplasmic reticulum. It localises to the lysosome. It catalyses the reaction an N-acyl-1-beta-D-(3-O-sulfo)-galactosyl-sphing-4-enine + H2O = a beta-D-galactosyl-(1&lt;-&gt;1')-N-acylsphing-4-enine + sulfate + H(+). Its activity is regulated as follows. Inhibited by phosphate. The phosphate forms a covalent bond with the active site 3-oxoalanine. Functionally, hydrolyzes cerebroside sulfate. The sequence is that of Arylsulfatase A (ARSA) from Homo sapiens (Human).